The following is a 936-amino-acid chain: Lon protease homolog, mitochondrial (936 aa).

The transit peptide at Met-1–Ala-40 directs the protein to the mitochondrion. The interval Ala-65–Ser-95 is disordered. The segment covering Phe-66–Ser-95 has biased composition (low complexity). The Lon N-terminal domain occupies Val-112 to Val-352. Residue Gly-507–Thr-514 coordinates ATP. The 185-residue stretch at Val-748–Trp-932 folds into the Lon proteolytic domain. Residues Ser-838 and Lys-881 contribute to the active site.

It belongs to the peptidase S16 family. Homohexamer or homoheptamer. Organized in a ring with a central cavity.

The protein resides in the mitochondrion matrix. The catalysed reaction is Hydrolysis of proteins in presence of ATP.. Functionally, ATP-dependent serine protease that mediates the selective degradation of misfolded, unassembled or oxidatively damaged polypeptides as well as certain short-lived regulatory proteins in the mitochondrial matrix. May also have a chaperone function in the assembly of inner membrane protein complexes. Participates in the regulation of mitochondrial gene expression and in the maintenance of the integrity of the mitochondrial genome. Binds to mitochondrial DNA in a site-specific manner. This Ostreococcus lucimarinus (strain CCE9901) protein is Lon protease homolog, mitochondrial.